A 244-amino-acid chain; its full sequence is Probable hydrolase R7 (244 aa).

Positions 1-20 are cleaved as a signal peptide; that stretch reads MTKPFILLVPGSFAPETIYA. Catalysis depends on charge relay system residues Asp-192 and His-224. The N-linked (GlcNAc...) asparagine glycan is linked to Asn-227.

Belongs to the AB hydrolase superfamily.

Its pathway is secondary metabolite biosynthesis. Probable hydrolase; part of the gene cluster that mediates the biosynthesis of squalestatin S1 (SQS1, also known as zaragozic acid A), a lead compound for the treatment of hyper-cholesterolemia by targeting squalene synthase (SS). Both phenylalanine and benzoic acid are known precursors of SQS1 and so it is unsurprising that the cluster also contains genes potentially involved in benzoate production such as phenyl-alanine ammonia lysase (PAL) M7, which catalyzes the first step in the degradation of phenylalanine, or the NADP-dependent dehydrogenase M3. The cluster contains two PKS encoding genes. The tetraketide synthase is responsible for the biosynthesis of the tetraketide sidechain of SQS1. The biosynthesis must involve 3 rounds of chain extension. After the first and second rounds methyl-transfer occurs, and in all rounds of extension the ketoreductase and dehydratase areactive. The enoyl reductase and C-MeT are not active in the final round of extension. The other PKS is therefore likely to encode squalestatin hexaketide synthase (SQHKS). The hexaketide main chain is initiated by benzoate which is an unusual starter unit for a highly reducing polyketide synthase. The cluster also contains a gene encoding a citrate synthase-like protein R3 presumably involved in linking the hexaketide to the oxaloacetate moiety. Formation of the tetraketide CoA may be catalyzed by the M9 CoA ligase, but the mechanism of release of the tetraketide and the hexaketide from their respective PKS remains unknown, although the cluster encodes a potential esterase (M8) and a possible hydrolase (M10) which could be involved in these processes. Two acyltransferases (AT), M4 and R4, are also encoded in the cluster. M4 is responsible for loading of the tetraketide sidechain from CoA onto the squalestatin core as the final step of biosynthesis. M4 appears to have a broad substrate selectivity for its acyl CoA substrate, allowing the in vitro synthesis of novel squalestatins. The biosynthesis of SQS1 requires several oxidative steps likely performed by oxidoreductases M1, R1 and R2. Finally, in support of the identification of the cluster as being responsible for SQS1 production, the cluster contains a gene encoding a putative squalene synthase (SS) R6, suggesting a likely mechanism for self-resistance. This is Probable hydrolase R7 from Phoma sp. (strain ATCC 20986 / MF5453).